The chain runs to 236 residues: Phosphoribosylaminoimidazole-succinocarboxamide synthase (236 aa).

Belongs to the SAICAR synthetase family.

The catalysed reaction is 5-amino-1-(5-phospho-D-ribosyl)imidazole-4-carboxylate + L-aspartate + ATP = (2S)-2-[5-amino-1-(5-phospho-beta-D-ribosyl)imidazole-4-carboxamido]succinate + ADP + phosphate + 2 H(+). It functions in the pathway purine metabolism; IMP biosynthesis via de novo pathway; 5-amino-1-(5-phospho-D-ribosyl)imidazole-4-carboxamide from 5-amino-1-(5-phospho-D-ribosyl)imidazole-4-carboxylate: step 1/2. The chain is Phosphoribosylaminoimidazole-succinocarboxamide synthase from Pseudomonas savastanoi pv. phaseolicola (strain 1448A / Race 6) (Pseudomonas syringae pv. phaseolicola (strain 1448A / Race 6)).